A 205-amino-acid polypeptide reads, in one-letter code: Cytochrome c oxidase subunit 2 (205 aa).

Residues His115, Cys150, Glu152, Cys154, His158, and Met161 each coordinate Cu cation. Glu152 is a Mg(2+) binding site.

Belongs to the cytochrome c oxidase subunit 2 family. In terms of assembly, component of the cytochrome c oxidase (complex IV, CIV), a multisubunit enzyme composed of a catalytic core of 3 subunits and several supernumerary subunits. The complex exists as a monomer or a dimer and forms supercomplexes (SCs) in the inner mitochondrial membrane with ubiquinol-cytochrome c oxidoreductase (cytochrome b-c1 complex, complex III, CIII). The cofactor is Cu cation.

Its subcellular location is the mitochondrion inner membrane. The catalysed reaction is 4 Fe(II)-[cytochrome c] + O2 + 8 H(+)(in) = 4 Fe(III)-[cytochrome c] + 2 H2O + 4 H(+)(out). Component of the cytochrome c oxidase, the last enzyme in the mitochondrial electron transport chain which drives oxidative phosphorylation. The respiratory chain contains 3 multisubunit complexes succinate dehydrogenase (complex II, CII), ubiquinol-cytochrome c oxidoreductase (cytochrome b-c1 complex, complex III, CIII) and cytochrome c oxidase (complex IV, CIV), that cooperate to transfer electrons derived from NADH and succinate to molecular oxygen, creating an electrochemical gradient over the inner membrane that drives transmembrane transport and the ATP synthase. Cytochrome c oxidase is the component of the respiratory chain that catalyzes the reduction of oxygen to water. Electrons originating from reduced cytochrome c in the intermembrane space (IMS) are transferred via the dinuclear copper A center (CU(A)) of subunit 2 and heme A of subunit 1 to the active site in subunit 1, a binuclear center (BNC) formed by heme A3 and copper B (CU(B)). The BNC reduces molecular oxygen to 2 water molecules using 4 electrons from cytochrome c in the IMS and 4 protons from the mitochondrial matrix. The sequence is that of Cytochrome c oxidase subunit 2 (COII) from Paramecium tetraurelia.